The following is a 55-amino-acid chain: Large ribosomal subunit protein bL33 (55 aa).

Residues 1–11 (MAKGARDKIKL) show a composition bias toward basic and acidic residues. The disordered stretch occupies residues 1 to 24 (MAKGARDKIKLESTAGTGHFYTTT). Positions 14-24 (TAGTGHFYTTT) are enriched in polar residues.

Belongs to the bacterial ribosomal protein bL33 family.

The polypeptide is Large ribosomal subunit protein bL33 (Burkholderia multivorans (strain ATCC 17616 / 249)).